We begin with the raw amino-acid sequence, 418 residues long: Glucose-1-phosphate adenylyltransferase (418 aa).

Residues Tyr-104, Gly-169, 184–185, and Ser-202 each bind alpha-D-glucose 1-phosphate; that span reads EK.

It belongs to the bacterial/plant glucose-1-phosphate adenylyltransferase family. As to quaternary structure, homotetramer.

The catalysed reaction is alpha-D-glucose 1-phosphate + ATP + H(+) = ADP-alpha-D-glucose + diphosphate. It participates in glycan biosynthesis; glycogen biosynthesis. Functionally, involved in the biosynthesis of ADP-glucose, a building block required for the elongation reactions to produce glycogen. Catalyzes the reaction between ATP and alpha-D-glucose 1-phosphate (G1P) to produce pyrophosphate and ADP-Glc. The polypeptide is Glucose-1-phosphate adenylyltransferase (Jannaschia sp. (strain CCS1)).